The primary structure comprises 622 residues: Meiotic expression up-regulated protein 25 (622 aa).

The sequence is that of Meiotic expression up-regulated protein 25 (meu25) from Schizosaccharomyces pombe (strain 972 / ATCC 24843) (Fission yeast).